The chain runs to 245 residues: DNA polymerase zeta processivity subunit (245 aa).

Residues 3–203 (RWVEKWLRVY…PPKIKLTSLV (201 aa)) form the HORMA domain.

This sequence belongs to the MAD2 family. As to quaternary structure, forms DNA polymerase zeta with REV3. Interacts with REV1.

The protein localises to the mitochondrion. In terms of biological role, required for DNA damage induced mutagenesis. Involved in DNA repair, mitochondrial DNA repair and translesion synthesis. Has a role in the bypass of abasic (AP) sites. In Saccharomyces cerevisiae (strain ATCC 204508 / S288c) (Baker's yeast), this protein is DNA polymerase zeta processivity subunit (REV7).